The chain runs to 180 residues: Ribosome rescue factor SmrB (180 aa).

The region spanning 98–173 (LDLHGLTQLQ…GNAALLVLVA (76 aa)) is the Smr domain.

This sequence belongs to the SmrB family. As to quaternary structure, associates with collided ribosomes, but not with correctly translating polysomes.

Functionally, acts as a ribosome collision sensor. Detects stalled/collided disomes (pairs of ribosomes where the leading ribosome is stalled and a second ribosome has collided with it) and endonucleolytically cleaves mRNA at the 5' boundary of the stalled ribosome. Stalled/collided disomes form a new interface (primarily via the 30S subunits) that binds SmrB. Cleaved mRNA becomes available for tmRNA ligation, leading to ribosomal subunit dissociation and rescue of stalled ribosomes. The protein is Ribosome rescue factor SmrB of Pectobacterium carotovorum subsp. carotovorum (strain PC1).